Consider the following 423-residue polypeptide: Type II methyltransferase M.NlaIV (423 aa).

The SAM-dependent MTase C5-type domain occupies 4–423 (IKFIDLFSGM…AVSERLLHTL (420 aa)). Cysteine 80 is an active-site residue.

It belongs to the class I-like SAM-binding methyltransferase superfamily. C5-methyltransferase family.

The catalysed reaction is a 2'-deoxycytidine in DNA + S-adenosyl-L-methionine = a 5-methyl-2'-deoxycytidine in DNA + S-adenosyl-L-homocysteine + H(+). In terms of biological role, a methylase that recognizes the double-stranded sequence 5'-GGNNCC-3', methylates C-? on both strands, and protects the DNA from cleavage by the NlaIV endonuclease. The sequence is that of Type II methyltransferase M.NlaIV (nlaIVM) from Neisseria lactamica.